Reading from the N-terminus, the 246-residue chain is MKTFIFLALLGAAVAFPVDDDDKIVGGYTCGANTVPYQVSLNSGYHFCGGSLINSQWVVSAAHCYKSGIQVRLGEDNINVVEGNEQFISASKSIVHPSYNSNTLNNDIMLIKLKSAASLNSRVASISLPTSCASAGTQCLISGWGNTKSSGTSYPDVLKCLKAPILSDSSCKSAYPGQITSNMFCAGYLEGGKDSCQGDSGGPVVCSGKLQGIVSWGSGCAQKNKPGVYTKVCNYVSWIKQTIASN.

The first 17 residues, 1 to 17, serve as a signal peptide directing secretion; that stretch reads MKTFIFLALLGAAVAFP. Positions 18–23 are cleaved as a propeptide — activation peptide; the sequence is VDDDDK. In terms of domain architecture, Peptidase S1 spans 24 to 244; sequence IVGGYTCGAN…YVSWIKQTIA (221 aa). Disulfide bonds link Cys-30–Cys-160, Cys-48–Cys-64, Cys-132–Cys-233, Cys-139–Cys-206, Cys-171–Cys-185, and Cys-196–Cys-220. His-63 (charge relay system) is an active-site residue. Positions 75, 77, 80, and 85 each coordinate Ca(2+). Asp-107 acts as the Charge relay system in catalysis. Substrate is bound by residues 194 to 195, 197 to 198, and Ser-200; these read DS and QG. Ser-200 acts as the Charge relay system in catalysis.

This sequence belongs to the peptidase S1 family. In terms of assembly, interacts with SERPINA1. It depends on Ca(2+) as a cofactor. Autocatalytic cleavage after Lys-23 leads to beta-trypsin by releasing a terminal hexapeptide. Subsequent cleavage after Lys-148 leads to alpha-trypsin. Further cleavage after Lys-193 yields pseudotrypsin. A cleavage may also occur after Arg-122. In terms of processing, not sulfated on tyrosine residue(s). As to expression, synthesized in the acinar cells of the pancreas.

The protein localises to the secreted. It is found in the extracellular space. The enzyme catalyses Preferential cleavage: Arg-|-Xaa, Lys-|-Xaa.. Its activity is regulated as follows. Is inhibited by scorpion cyclotide trypsin inhibitor TopI1. This Bos taurus (Bovine) protein is Serine protease 1 (PRSS1).